The chain runs to 30 residues: Trypsin inhibitor 4 (30 aa).

Cystine bridges form between C3/C20, C10/C22, and C16/C28.

This sequence belongs to the protease inhibitor I7 (squash-type serine protease inhibitor) family.

It is found in the secreted. Its function is as follows. Inhibits trypsin; probably participates in a plant defense mechanism. The polypeptide is Trypsin inhibitor 4 (Momordica charantia (Bitter gourd)).